A 639-amino-acid chain; its full sequence is Tubulin--tyrosine ligase-like protein 12 (639 aa).

The 345-residue stretch at 295–639 (PQGHVFRVHC…TDNCHVTRII (345 aa)) folds into the TTL domain. Residues 445-448 (SKYI), Lys-463, and Asp-465 contribute to the ATP site.

This sequence belongs to the tubulin--tyrosine ligase family. In terms of assembly, interacts with MAVS; the interaction prevents MAVS binding to TBK1 and IKBKE. Interacts (via N-terminus) with TBK1 (via protein kinase domain). Interacts (via TTL domain) with IKBKE (via protein kinase domain). Interacts with tubulin alpha. Interacts with histone H3 and histone H4 (when trimethylated at 'Lys-20' (H4K20me3)). Interacts with CBX3. Widely expressed with highest levels in brain, kidney, liver, lung, muscle and testis.

Its subcellular location is the cytoplasm. It localises to the midbody. It is found in the cytoskeleton. The protein localises to the microtubule organizing center. The protein resides in the centrosome. Its subcellular location is the spindle. It localises to the nucleus. Negatively regulates post-translational modifications of tubulin, including detyrosination of the C-terminus and polyglutamylation of glutamate residues. Also, indirectly promotes histone H4 trimethylation at 'Lys-20' (H4K20me3). Probably by controlling tubulin and/or histone H4 post-translational modifications, plays a role in mitosis and in maintaining chromosome number stability. During RNA virus-mediated infection, acts as a negative regulator of the RIG-I pathway by preventing MAVS binding to TBK1 and IKBKE. The polypeptide is Tubulin--tyrosine ligase-like protein 12 (Mus musculus (Mouse)).